An 849-amino-acid polypeptide reads, in one-letter code: Protein translocase subunit SecA (849 aa).

ATP-binding positions include Gln-85, 103–107 (GEGKT), and Asp-493. 4 residues coordinate Zn(2+): Cys-832, Cys-834, Cys-843, and His-844.

Belongs to the SecA family. Monomer and homodimer. Part of the essential Sec protein translocation apparatus which comprises SecA, SecYEG and auxiliary proteins SecDF. Other proteins may also be involved. Zn(2+) is required as a cofactor.

The protein resides in the cell membrane. It localises to the cytoplasm. The enzyme catalyses ATP + H2O + cellular proteinSide 1 = ADP + phosphate + cellular proteinSide 2.. Its function is as follows. Part of the Sec protein translocase complex. Interacts with the SecYEG preprotein conducting channel. Has a central role in coupling the hydrolysis of ATP to the transfer of proteins into and across the cell membrane, serving as an ATP-driven molecular motor driving the stepwise translocation of polypeptide chains across the membrane. The polypeptide is Protein translocase subunit SecA (Streptococcus thermophilus (strain ATCC BAA-491 / LMD-9)).